Consider the following 182-residue polypeptide: Troponin I, fast skeletal muscle (182 aa).

G2 bears the N-acetylglycine mark. Residues 2–48 (GDEEKRNRAITARRQHLKSVMLQIAATELEKEESRRESEKENYLSEH) form an involved in binding TNC region. T12 carries the post-translational modification Phosphothreonine. A compositionally biased stretch (basic and acidic residues) spans 29–45 (ELEKEESRRESEKENYL). A disordered region spans residues 29 to 53 (ELEKEESRRESEKENYLSEHCPPLH). The involved in binding TNC and actin stretch occupies residues 97-117 (NQKLFDLRGKFKRPPLRRVRM). S118 is modified (phosphoserine).

This sequence belongs to the troponin I family. In terms of assembly, binds to actin and tropomyosin.

Troponin I is the inhibitory subunit of troponin, the thin filament regulatory complex which confers calcium-sensitivity to striated muscle actomyosin ATPase activity. The protein is Troponin I, fast skeletal muscle (Tnni2) of Mus musculus (Mouse).